Here is a 435-residue protein sequence, read N- to C-terminus: Phosphomethylpyrimidine synthase (435 aa).

Substrate is bound by residues asparagine 67, methionine 96, tyrosine 125, histidine 163, 185 to 187 (SRG), 226 to 229 (DGLR), and glutamate 265. Residue histidine 269 participates in Zn(2+) binding. Tyrosine 292 is a binding site for substrate. Residue histidine 333 participates in Zn(2+) binding. Residues cysteine 408, cysteine 411, and cysteine 415 each coordinate [4Fe-4S] cluster.

This sequence belongs to the ThiC family. [4Fe-4S] cluster is required as a cofactor.

The catalysed reaction is 5-amino-1-(5-phospho-beta-D-ribosyl)imidazole + S-adenosyl-L-methionine = 4-amino-2-methyl-5-(phosphooxymethyl)pyrimidine + CO + 5'-deoxyadenosine + formate + L-methionine + 3 H(+). It functions in the pathway cofactor biosynthesis; thiamine diphosphate biosynthesis. Catalyzes the synthesis of the hydroxymethylpyrimidine phosphate (HMP-P) moiety of thiamine from aminoimidazole ribotide (AIR) in a radical S-adenosyl-L-methionine (SAM)-dependent reaction. This Thermus thermophilus (strain ATCC BAA-163 / DSM 7039 / HB27) protein is Phosphomethylpyrimidine synthase.